Here is a 415-residue protein sequence, read N- to C-terminus: Serine hydroxymethyltransferase 1 (415 aa).

(6S)-5,6,7,8-tetrahydrofolate is bound by residues Leu-117 and 121 to 123 (GHL). Lys-225 is subject to N6-(pyridoxal phosphate)lysine. Residue 349–351 (SPF) participates in (6S)-5,6,7,8-tetrahydrofolate binding.

This sequence belongs to the SHMT family. Homodimer. The cofactor is pyridoxal 5'-phosphate.

Its subcellular location is the cytoplasm. The enzyme catalyses (6R)-5,10-methylene-5,6,7,8-tetrahydrofolate + glycine + H2O = (6S)-5,6,7,8-tetrahydrofolate + L-serine. It functions in the pathway one-carbon metabolism; tetrahydrofolate interconversion. It participates in amino-acid biosynthesis; glycine biosynthesis; glycine from L-serine: step 1/1. In terms of biological role, catalyzes the reversible interconversion of serine and glycine with tetrahydrofolate (THF) serving as the one-carbon carrier. This reaction serves as the major source of one-carbon groups required for the biosynthesis of purines, thymidylate, methionine, and other important biomolecules. Also exhibits THF-independent aldolase activity toward beta-hydroxyamino acids, producing glycine and aldehydes, via a retro-aldol mechanism. The polypeptide is Serine hydroxymethyltransferase 1 (Sulfurimonas denitrificans (strain ATCC 33889 / DSM 1251) (Thiomicrospira denitrificans (strain ATCC 33889 / DSM 1251))).